A 221-amino-acid polypeptide reads, in one-letter code: Protein DEHYDRATION-INDUCED 19 homolog 2 (221 aa).

2 disordered regions span residues methionine 1–lysine 24 and valine 162–aspartate 193.

This sequence belongs to the Di19 family. Not phosphorylated in vitro by CPK3 or CPK11. As to expression, expressed in seedlings, roots, leaves, stems, flowers and siliques.

Its subcellular location is the cytoplasm. It localises to the nucleus. This is Protein DEHYDRATION-INDUCED 19 homolog 2 (DI19-2) from Arabidopsis thaliana (Mouse-ear cress).